The following is a 250-amino-acid chain: Intermembrane phospholipid transport system lipoprotein MlaA (250 aa).

An N-terminal signal peptide occupies residues 1 to 18 (MKTKTILTALLSAIALTG). C19 carries the N-palmitoyl cysteine lipid modification. A lipid anchor (S-diacylglycerol cysteine) is attached at C19.

It belongs to the MlaA family.

It localises to the cell outer membrane. In terms of biological role, involved in a phospholipid transport pathway that maintains lipid asymmetry in the outer membrane by retrograde trafficking of phospholipids from the outer membrane to the inner membrane. This Haemophilus influenzae (strain ATCC 51907 / DSM 11121 / KW20 / Rd) protein is Intermembrane phospholipid transport system lipoprotein MlaA.